Consider the following 585-residue polypeptide: Regulator of gene activity (585 aa).

Residues 42-56 (FQTDFANSYPGTANY) are compositionally biased toward polar residues. Disordered stretches follow at residues 42-93 (FQTD…GNRN), 148-191 (GGGG…PGSK), and 349-394 (GVGG…KVTN). Residues 58 to 71 (QAPQQQQQQQQQPQ) show a composition bias toward low complexity. Residues 166 to 184 (PSLTNARGQNDQTLPQSNP) show a composition bias toward polar residues. Gly residues predominate over residues 349–367 (GVGGGLGSGSGSSGSGAGG). Over residues 372–388 (DNSSNDKLVKSGVQTSP) the composition is skewed to polar residues.

The protein belongs to the CNOT2/3/5 family. Component of the CCR4-NOT complex composed of at least Pop2/Caf1-55, Ccr4, Not1, Rga/Not2, and Not3. In terms of tissue distribution, expressed in heterogeneous levels between adjacent germline stem cells (at protein level).

The protein resides in the cytoplasm. Component of the CCR4-NOT complex which is one of the major cellular mRNA deadenylases and is linked to various cellular processes including bulk mRNA degradation, miRNA-mediated repression, translational repression during translational initiation and general transcription regulation. Additional complex functions may be a consequence of its influence on mRNA expression. Essential for viability. Acts as a suppressor of position effect variegation (PEV) at the white locus and regulates the expression of several unrelated genes. Plays a role in germline stem cell differentiation in the ovaries. In Drosophila melanogaster (Fruit fly), this protein is Regulator of gene activity.